A 196-amino-acid chain; its full sequence is MQFLTAVSPQSSSTPSWKIETKYSTRVLTGNWTEERRKFIKATEKTPQTIYRKEYVPFPGHRPDQISRWYSKRTVEGLPYKYLITHHQEPSQRYLISTYDDHYNRHNYHPGLPELRTWNRHKLLWLPEKADFPLLGPPTNYGLYEQLKQKWLPPPEATLRESIYTSSYPRPPAGAMSRREHAIPVPPPRLQPVPHF.

Mn stretches follow at residues 46-61 (TPQT…FPGH) and 96-108 (ISTY…RHNY). The tract at residues 168–196 (YPRPPAGAMSRREHAIPVPPPRLQPVPHF) is disordered. Residues 184-196 (PVPPPRLQPVPHF) show a composition bias toward pro residues.

As to quaternary structure, microtubule inner protein component of sperm flagellar doublet microtubules. Expressed in trachea multiciliated cells.

It localises to the cytoplasm. Its subcellular location is the cytoskeleton. The protein localises to the cilium axoneme. The protein resides in the flagellum axoneme. Functionally, microtubule inner protein (MIP) part of the dynein-decorated doublet microtubules (DMTs) in cilia axoneme, which is required for motile cilia beating. The chain is Cilia- and flagella-associated protein 107 from Bos taurus (Bovine).